Here is a 453-residue protein sequence, read N- to C-terminus: Chromosomal replication initiator protein DnaA (453 aa).

The interval 1 to 73 (MELSPQDLWT…ADVVEEILGY (73 aa)) is domain I, interacts with DnaA modulators. The tract at residues 73-110 (YSIDIQLTSTQGENIAIVGETQVSAYYPTLSGEHPKPI) is domain II. The tract at residues 111-327 (KLNPKYTFSR…GALIRAITYI (217 aa)) is domain III, AAA+ region. 4 residues coordinate ATP: glycine 155, glycine 157, lysine 158, and threonine 159. The domain IV, binds dsDNA stretch occupies residues 328-453 (SISGLSMTVE…HLASRTQKTT (126 aa)).

The protein belongs to the DnaA family. In terms of assembly, oligomerizes as a right-handed, spiral filament on DNA at oriC.

Its subcellular location is the cytoplasm. Its function is as follows. Plays an essential role in the initiation and regulation of chromosomal replication. ATP-DnaA binds to the origin of replication (oriC) to initiate formation of the DNA replication initiation complex once per cell cycle. Binds the DnaA box (a 9 base pair repeat at the origin) and separates the double-stranded (ds)DNA. Forms a right-handed helical filament on oriC DNA; dsDNA binds to the exterior of the filament while single-stranded (ss)DNA is stabiized in the filament's interior. The ATP-DnaA-oriC complex binds and stabilizes one strand of the AT-rich DNA unwinding element (DUE), permitting loading of DNA polymerase. After initiation quickly degrades to an ADP-DnaA complex that is not apt for DNA replication. Binds acidic phospholipids. The polypeptide is Chromosomal replication initiator protein DnaA (Gloeothece citriformis (strain PCC 7424) (Cyanothece sp. (strain PCC 7424))).